Reading from the N-terminus, the 126-residue chain is UPF0212 protein TON_0350 (126 aa).

Belongs to the UPF0212 family.

The sequence is that of UPF0212 protein TON_0350 from Thermococcus onnurineus (strain NA1).